Here is a 277-residue protein sequence, read N- to C-terminus: Phosphonates import ATP-binding protein PhnC (277 aa).

Residues 3–251 (IKLDKVSARH…RLQALYAQHL (249 aa)) form the ABC transporter domain. 40-47 (GPSGAGKT) contacts ATP.

It belongs to the ABC transporter superfamily. Phosphonates importer (TC 3.A.1.9.1) family. As to quaternary structure, the complex is composed of two ATP-binding proteins (PhnC), two transmembrane proteins (PhnE) and a solute-binding protein (PhnD).

The protein localises to the cell inner membrane. It catalyses the reaction phosphonate(out) + ATP + H2O = phosphonate(in) + ADP + phosphate + H(+). In terms of biological role, part of the ABC transporter complex PhnCDE involved in phosphonates import. Responsible for energy coupling to the transport system. The chain is Phosphonates import ATP-binding protein PhnC from Polaromonas sp. (strain JS666 / ATCC BAA-500).